Reading from the N-terminus, the 873-residue chain is Chitin synthase F (873 aa).

A disordered region spans residues 1–105 (MEDAHDQSSR…KSGSGLRRYP (105 aa)). 3 stretches are compositionally biased toward polar residues: residues 33–46 (SYPS…SQSL), 58–72 (ISSQ…QNPS), and 80–98 (ESEV…TKSG). A glycan (N-linked (GlcNAc...) asparagine) is linked at Asn-506. A run of 7 helical transmembrane segments spans residues 532-554 (LVFL…FSLA), 588-608 (IVNN…FFLA), 621-641 (ILTF…SFYL), 672-692 (GLVL…SILY), 702-722 (SWAY…YAFC), 802-822 (LVLL…NDSV), and 841-861 (VILW…LWFL).

The protein belongs to the chitin synthase family. Class III subfamily.

It is found in the cell membrane. It catalyses the reaction [(1-&gt;4)-N-acetyl-beta-D-glucosaminyl](n) + UDP-N-acetyl-alpha-D-glucosamine = [(1-&gt;4)-N-acetyl-beta-D-glucosaminyl](n+1) + UDP + H(+). Functionally, polymerizes chitin, a structural polymer of the cell wall and septum, by transferring the sugar moiety of UDP-GlcNAc to the non-reducing end of the growing chitin polymer. Plays an important role in septal growth or maintenance. Mediates colony spore formation. In Aspergillus niger (strain ATCC MYA-4892 / CBS 513.88 / FGSC A1513), this protein is Chitin synthase F.